The primary structure comprises 464 residues: Protein FAM90A11 (464 aa).

Disordered stretches follow at residues 1–42, 70–389, and 415–437; these read MMAR…DPRL, PATL…HDGA, and HSPE…SEAP. Basic and acidic residues-rich tracts occupy residues 74 to 89 and 97 to 114; these read GKKE…KPRV and NKDK…DPQR. A compositionally biased stretch (low complexity) spans 180-197; the sequence is LASLSPLRKASLSSSSSL. Over residues 341–356 the composition is skewed to polar residues; it reads GPSTSPQMGRRTSAQV.

This sequence belongs to the FAM90 family.

The polypeptide is Protein FAM90A11 (Homo sapiens (Human)).